Consider the following 263-residue polypeptide: Receptor-transporting protein 1 (263 aa).

Residues 1-238 (MRIFRPWRLR…QTGSGWNFCS (238 aa)) lie on the Cytoplasmic side of the membrane. The 3CxxC-type zinc-finger motif lies at 88-197 (ASGRFHCSWC…GEFCEACQEG (110 aa)). A helical transmembrane segment spans residues 239-259 (IPWCLFWATVLLLIIYLQFSF). The Extracellular portion of the chain corresponds to 260–263 (RSSV).

Belongs to the TMEM7 family. Interacts with olfactory receptors. In terms of tissue distribution, expressed in testis.

The protein resides in the cell membrane. Functionally, specifically promotes functional cell surface expression of olfactory receptors, but not of other GPCRs. The chain is Receptor-transporting protein 1 (RTP1) from Homo sapiens (Human).